We begin with the raw amino-acid sequence, 320 residues long: Ferrochelatase (320 aa).

Fe cation contacts are provided by His-194 and Glu-275.

This sequence belongs to the ferrochelatase family. Monomer.

It localises to the cytoplasm. It catalyses the reaction heme b + 2 H(+) = protoporphyrin IX + Fe(2+). It functions in the pathway porphyrin-containing compound metabolism; protoheme biosynthesis; protoheme from protoporphyrin-IX: step 1/1. Its function is as follows. Catalyzes the ferrous insertion into protoporphyrin IX. This chain is Ferrochelatase, found in Salmonella typhi.